The chain runs to 77 residues: Acyl carrier protein (77 aa).

Residues 2–77 form the Carrier domain; sequence SDIADRVKKI…DAVKFISEAA (76 aa). At Ser-37 the chain carries O-(pantetheine 4'-phosphoryl)serine.

It belongs to the acyl carrier protein (ACP) family. 4'-phosphopantetheine is transferred from CoA to a specific serine of apo-ACP by AcpS. This modification is essential for activity because fatty acids are bound in thioester linkage to the sulfhydryl of the prosthetic group.

Its subcellular location is the cytoplasm. It functions in the pathway lipid metabolism; fatty acid biosynthesis. Functionally, carrier of the growing fatty acid chain in fatty acid biosynthesis. This Cereibacter sphaeroides (strain ATCC 17029 / ATH 2.4.9) (Rhodobacter sphaeroides) protein is Acyl carrier protein.